The chain runs to 790 residues: Alpha,alpha-trehalose-phosphate synthase [UDP-forming] B (790 aa).

The protein in the N-terminal section; belongs to the glycosyltransferase 20 family. This sequence in the C-terminal section; belongs to the trehalose phosphatase family.

The enzyme catalyses D-glucose 6-phosphate + UDP-alpha-D-glucose = alpha,alpha-trehalose 6-phosphate + UDP + H(+). In terms of biological role, synthesizes trehalose 6-phosphate, the precursor for the production of trehalose, the main carbohydrate storage reserve of the dormant spore. Trehalose accumulates in both prestalk and prespore cells and then is rapidly metabolized during terminal differentiation of stalk cells, while being stored in spores, where it serves as the principal energy and carbon source for germination. The chain is Alpha,alpha-trehalose-phosphate synthase [UDP-forming] B (tpsB) from Dictyostelium discoideum (Social amoeba).